The primary structure comprises 255 residues: Bouquet formation protein 3 (255 aa).

8 helical membrane-spanning segments follow: residues 13-33 (IKVSIYLFLHTLTYGLLNYHL), 48-68 (IPYWMSYLSIIMHVGQSLLLQ), 72-94 (LGYGWLLLTKYPVYVLLSTYYLT), 99-116 (IAWAFIIDAISLLVARCF), 132-152 (YSVSFLFTIMASVLISVLNYI), 172-192 (SLVAPPLPLQYLAHVPIGYVI), 205-225 (SLFLMIFLTLWNCFIPYSILF), and 235-255 (VVGAYLSQIWIITFICWALSL).

Its subcellular location is the endoplasmic reticulum membrane. The protein localises to the nucleus inner membrane. In terms of biological role, connects telomeres to the nuclear envelop (NE) during both vegetative growth and meiosis. This connection ensures clustering of telomeres to the spindle pole body (SPB) when cells enter meiotic prophase. The protein is Bouquet formation protein 3 (bqt3) of Schizosaccharomyces pombe (strain 972 / ATCC 24843) (Fission yeast).